The chain runs to 339 residues: MRVYYDRDADLARILDKKIAIVGYGSQGHAHALNLRDSGATNVAVALRAGSPTAKKAQGEGLKVMTVAEAAAWADLLMILAPDEHQAAIYKNDIAPNIRDGAALLFAHGLNVHFGLIEPKDTIDVLMVAPKGPGHTVRGEYQKGGGVPCLIAVHHNATGNALDLGLAYASAIGGGRSGIIETNFREECETDLFGEQAVLCGGTVDLIRCGFEVLVEAGYAPEMAYFECLHELKLIVDLIYEGGIANMNYSISNTAEYGEYVTGPRIVTAETKAEMKRVLEDIQSGKFVRDFMLENAVGQPSFKATRRRASEHQIEEVGARLRGMMPWIAKNKLVDVTKN.

Residues 1 to 182 (MRVYYDRDAD…GGGRSGIIET (182 aa)) form the KARI N-terminal Rossmann domain. NADP(+)-binding positions include 24–27 (YGSQ), Arg48, Ser51, Thr53, and 83–86 (DEHQ). His108 is an active-site residue. Gly134 provides a ligand contact to NADP(+). Residues 183–328 (NFREECETDL…ARLRGMMPWI (146 aa)) enclose the KARI C-terminal knotted domain. Asp191, Glu195, Glu227, and Glu231 together coordinate Mg(2+). Residue Ser252 participates in substrate binding.

It belongs to the ketol-acid reductoisomerase family. It depends on Mg(2+) as a cofactor.

It carries out the reaction (2R)-2,3-dihydroxy-3-methylbutanoate + NADP(+) = (2S)-2-acetolactate + NADPH + H(+). The catalysed reaction is (2R,3R)-2,3-dihydroxy-3-methylpentanoate + NADP(+) = (S)-2-ethyl-2-hydroxy-3-oxobutanoate + NADPH + H(+). It participates in amino-acid biosynthesis; L-isoleucine biosynthesis; L-isoleucine from 2-oxobutanoate: step 2/4. It functions in the pathway amino-acid biosynthesis; L-valine biosynthesis; L-valine from pyruvate: step 2/4. Its function is as follows. Involved in the biosynthesis of branched-chain amino acids (BCAA). Catalyzes an alkyl-migration followed by a ketol-acid reduction of (S)-2-acetolactate (S2AL) to yield (R)-2,3-dihydroxy-isovalerate. In the isomerase reaction, S2AL is rearranged via a Mg-dependent methyl migration to produce 3-hydroxy-3-methyl-2-ketobutyrate (HMKB). In the reductase reaction, this 2-ketoacid undergoes a metal-dependent reduction by NADPH to yield (R)-2,3-dihydroxy-isovalerate. The sequence is that of Ketol-acid reductoisomerase (NADP(+)) from Caulobacter sp. (strain K31).